The chain runs to 234 residues: Purine nucleoside phosphorylase DeoD-type (234 aa).

Position 4 (His-4) interacts with a purine D-ribonucleoside. Phosphate-binding positions include Gly-20, Arg-24, Arg-43, and 87–90 (RIGT). A purine D-ribonucleoside contacts are provided by residues 179–181 (EME) and 203–204 (SD). The active-site Proton donor is Asp-204.

This sequence belongs to the PNP/UDP phosphorylase family. As to quaternary structure, homohexamer; trimer of homodimers.

The enzyme catalyses a purine D-ribonucleoside + phosphate = a purine nucleobase + alpha-D-ribose 1-phosphate. It catalyses the reaction a purine 2'-deoxy-D-ribonucleoside + phosphate = a purine nucleobase + 2-deoxy-alpha-D-ribose 1-phosphate. Functionally, catalyzes the reversible phosphorolytic breakdown of the N-glycosidic bond in the beta-(deoxy)ribonucleoside molecules, with the formation of the corresponding free purine bases and pentose-1-phosphate. In Helicobacter pylori (strain Shi470), this protein is Purine nucleoside phosphorylase DeoD-type.